The following is a 796-amino-acid chain: Exocyst complex component 3 (796 aa).

Residues 87–174 (PQLKEKLREL…GTNTEKEQML (88 aa)) are a coiled coil.

Belongs to the SEC6 family. In terms of assembly, the exocyst complex is composed of sec-3/exoc1, sec-5/exoc2, sec-6/exoc3, sec-8/exoc4, sec-10/exoc5, sec-15/exoc6, exo-70/exoc7 and exo-84/exoc8.

Its function is as follows. Component of the exocyst complex involved in the docking of exocytic vesicles with fusion sites on the plasma membrane. This Caenorhabditis elegans protein is Exocyst complex component 3 (sec-6).